A 152-amino-acid chain; its full sequence is MGSKVVIYTDGACAGNPGPGGWGALLQFNDTSKEVFGYELDTTNNRMEITAALEALRMLKKSCNIEIYTDSKYLQQGITAWIHNWIKNNWCKSNNEPVKNADLWQKLYAELSKHTIIWKWVKGHANNSGNIAADKLAVQGRETAIEILKCRG.

Residues 1–142 form the RNase H type-1 domain; that stretch reads MGSKVVIYTD…ADKLAVQGRE (142 aa). Mg(2+) contacts are provided by Asp10, Glu48, Asp70, and Asp134.

It belongs to the RNase H family. Monomer. It depends on Mg(2+) as a cofactor.

Its subcellular location is the cytoplasm. It carries out the reaction Endonucleolytic cleavage to 5'-phosphomonoester.. Endonuclease that specifically degrades the RNA of RNA-DNA hybrids. This is Ribonuclease H from Rickettsia massiliae (strain Mtu5).